The primary structure comprises 415 residues: Histidine--tRNA ligase (415 aa).

It belongs to the class-II aminoacyl-tRNA synthetase family. Homodimer.

It localises to the cytoplasm. The catalysed reaction is tRNA(His) + L-histidine + ATP = L-histidyl-tRNA(His) + AMP + diphosphate + H(+). This chain is Histidine--tRNA ligase, found in Clostridium botulinum (strain Loch Maree / Type A3).